A 31-amino-acid chain; its full sequence is Ranatuerin-2 (31 aa).

A disulfide bond links Cys23 and Cys28.

This sequence belongs to the frog skin active peptide (FSAP) family. Ranatuerin subfamily. Expressed by the skin glands.

The protein localises to the secreted. Functionally, antibacterial activity against Gram-positive bacterium S.aureus (MIC=60 uM). Shows no detectable hemolytic activity towards human erythrocytes. This Aquarana catesbeiana (American bullfrog) protein is Ranatuerin-2.